The following is a 301-amino-acid chain: Indole-3-glycerol phosphate synthase (301 aa).

The protein belongs to the TrpC family.

The enzyme catalyses 1-(2-carboxyphenylamino)-1-deoxy-D-ribulose 5-phosphate + H(+) = (1S,2R)-1-C-(indol-3-yl)glycerol 3-phosphate + CO2 + H2O. The protein operates within amino-acid biosynthesis; L-tryptophan biosynthesis; L-tryptophan from chorismate: step 4/5. The sequence is that of Indole-3-glycerol phosphate synthase from Prochlorococcus marinus (strain MIT 9313).